We begin with the raw amino-acid sequence, 374 residues long: Flagellar P-ring protein 1 (374 aa).

A signal peptide spans 1–26 (MVPNLMVIKKHLIGLLLILCPLSLQA).

Belongs to the FlgI family. In terms of assembly, the basal body constitutes a major portion of the flagellar organelle and consists of four rings (L,P,S, and M) mounted on a central rod.

Its subcellular location is the periplasm. The protein localises to the bacterial flagellum basal body. Its function is as follows. Assembles around the rod to form the L-ring and probably protects the motor/basal body from shearing forces during rotation. In Photobacterium profundum (strain SS9), this protein is Flagellar P-ring protein 1.